The chain runs to 35 residues: Cupiennin-2b (35 aa).

Glutamine 35 is subject to Glutamine amide.

Expressed by the venom gland.

It is found in the secreted. This chain is Cupiennin-2b, found in Cupiennius salei (American wandering spider).